We begin with the raw amino-acid sequence, 213 residues long: Protein-L-isoaspartate O-methyltransferase (213 aa).

Residue S62 is part of the active site.

This sequence belongs to the methyltransferase superfamily. L-isoaspartyl/D-aspartyl protein methyltransferase family.

Its subcellular location is the cytoplasm. It carries out the reaction [protein]-L-isoaspartate + S-adenosyl-L-methionine = [protein]-L-isoaspartate alpha-methyl ester + S-adenosyl-L-homocysteine. In terms of biological role, catalyzes the methyl esterification of L-isoaspartyl residues in peptides and proteins that result from spontaneous decomposition of normal L-aspartyl and L-asparaginyl residues. It plays a role in the repair and/or degradation of damaged proteins. The polypeptide is Protein-L-isoaspartate O-methyltransferase (Desulfovibrio desulfuricans (strain ATCC 27774 / DSM 6949 / MB)).